Reading from the N-terminus, the 860-residue chain is Glucans biosynthesis glucosyltransferase H (860 aa).

6 consecutive transmembrane segments (helical) span residues 146–166 (ILLILMLGQTIVAGWYMKGIL), 200–220 (ILLLFGILFCWVSAGFWTALM), 519–539 (VFLTGVMSYLSAPLWFFFLVL), 576–596 (LFSTTIVLLFLPKLLSVILIW), 610–630 (TVSMLLEMLFSVLLAPVRMLF), and 686–706 (FLWWLAPIVVSLMLSIPVSVI).

This sequence belongs to the glycosyltransferase 2 family. OpgH subfamily.

The protein resides in the cell inner membrane. It functions in the pathway glycan metabolism; osmoregulated periplasmic glucan (OPG) biosynthesis. Its function is as follows. Involved in the biosynthesis of osmoregulated periplasmic glucans (OPGs). The polypeptide is Glucans biosynthesis glucosyltransferase H (Pseudomonas syringae pv. syringae (strain B728a)).